The chain runs to 441 residues: DNA primase DnaG (441 aa).

The 77-residue stretch at 165 to 241 (DTIIIVEGRA…DIDYVARAPP (77 aa)) folds into the Toprim domain. Mg(2+) is bound by residues Glu-171, Asp-215, and Asp-217. A compositionally biased stretch (basic and acidic residues) spans 299 to 315 (KEEVAERGEEMESKAEG). The tract at residues 299-320 (KEEVAERGEEMESKAEGAEQPT) is disordered.

Belongs to the archaeal DnaG primase family. As to quaternary structure, forms a ternary complex with MCM helicase and DNA. Component of the archaeal exosome complex. Requires Mg(2+) as cofactor.

The enzyme catalyses ssDNA + n NTP = ssDNA/pppN(pN)n-1 hybrid + (n-1) diphosphate.. Functionally, RNA polymerase that catalyzes the synthesis of short RNA molecules used as primers for DNA polymerase during DNA replication. Also part of the exosome, which is a complex involved in RNA degradation. Acts as a poly(A)-binding protein that enhances the interaction between heteromeric, adenine-rich transcripts and the exosome. The polypeptide is DNA primase DnaG (Ignicoccus hospitalis (strain KIN4/I / DSM 18386 / JCM 14125)).